Consider the following 183-residue polypeptide: Ribonuclease M5 (183 aa).

One can recognise a Toprim domain in the interval 6-90 (KEVIVVEGKD…AYISRVSGTK (85 aa)). Mg(2+) contacts are provided by Glu-12, Asp-59, and Asp-61.

Belongs to the ribonuclease M5 family. Requires Mg(2+) as cofactor.

Its subcellular location is the cytoplasm. The catalysed reaction is Endonucleolytic cleavage of RNA, removing 21 and 42 nucleotides, respectively, from the 5'- and 3'-termini of a 5S-rRNA precursor.. Required for correct processing of both the 5' and 3' ends of 5S rRNA precursor. Cleaves both sides of a double-stranded region yielding mature 5S rRNA in one step. This chain is Ribonuclease M5, found in Fusobacterium nucleatum subsp. nucleatum (strain ATCC 25586 / DSM 15643 / BCRC 10681 / CIP 101130 / JCM 8532 / KCTC 2640 / LMG 13131 / VPI 4355).